A 150-amino-acid chain; its full sequence is Large ribosomal subunit protein bL17 (150 aa).

The segment at 126 to 150 is disordered; sequence DRAKRREERLKAQREGRDHEEETDE.

Belongs to the bacterial ribosomal protein bL17 family. Part of the 50S ribosomal subunit. Contacts protein L32.

This is Large ribosomal subunit protein bL17 from Solibacter usitatus (strain Ellin6076).